Consider the following 273-residue polypeptide: DNA repair protein RecO (273 aa).

This sequence belongs to the RecO family.

In terms of biological role, involved in DNA repair and RecF pathway recombination. This is DNA repair protein RecO from Mycolicibacterium gilvum (strain PYR-GCK) (Mycobacterium gilvum (strain PYR-GCK)).